A 383-amino-acid polypeptide reads, in one-letter code: Acetylornithine deacetylase (383 aa).

Histidine 80 is a Zn(2+) binding site. Aspartate 82 is an active-site residue. Aspartate 112 provides a ligand contact to Zn(2+). Glutamate 144 is an active-site residue. The Zn(2+) site is built by glutamate 145, glutamate 169, and histidine 355.

It belongs to the peptidase M20A family. ArgE subfamily. In terms of assembly, homodimer. It depends on Zn(2+) as a cofactor. Requires Co(2+) as cofactor. Glutathione serves as cofactor.

It localises to the cytoplasm. The catalysed reaction is N(2)-acetyl-L-ornithine + H2O = L-ornithine + acetate. Its pathway is amino-acid biosynthesis; L-arginine biosynthesis; L-ornithine from N(2)-acetyl-L-ornithine (linear): step 1/1. In terms of biological role, catalyzes the hydrolysis of the amide bond of N(2)-acetylated L-amino acids. Cleaves the acetyl group from N-acetyl-L-ornithine to form L-ornithine, an intermediate in L-arginine biosynthesis pathway, and a branchpoint in the synthesis of polyamines. This is Acetylornithine deacetylase from Erwinia tasmaniensis (strain DSM 17950 / CFBP 7177 / CIP 109463 / NCPPB 4357 / Et1/99).